The chain runs to 67 residues: Non-specific lipid-transfer protein 2 (67 aa).

4 disulfides stabilise this stretch: C3/C35, C11/C25, C26/C61, and C37/C67.

The protein belongs to the plant LTP family. Monomer. Disulfide bonds.

Plant non-specific lipid-transfer proteins transfer phospholipids as well as galactolipids across membranes. May play a role in wax or cutin deposition in the cell walls of expanding epidermal cells and certain secretory tissues. The sequence is that of Non-specific lipid-transfer protein 2 from Apium graveolens var. rapaceum (Celeriac).